A 632-amino-acid chain; its full sequence is tRNA uridine 5-carboxymethylaminomethyl modification enzyme MnmG (632 aa).

FAD is bound by residues 15–20 (GAGHAG), Ile-127, and Ser-182. 276–290 (GPRYCPSIEDKIVRF) is an NAD(+) binding site. FAD is bound at residue Gln-373.

The protein belongs to the MnmG family. As to quaternary structure, homodimer. Heterotetramer of two MnmE and two MnmG subunits. FAD serves as cofactor.

It localises to the cytoplasm. Functionally, NAD-binding protein involved in the addition of a carboxymethylaminomethyl (cmnm) group at the wobble position (U34) of certain tRNAs, forming tRNA-cmnm(5)s(2)U34. This is tRNA uridine 5-carboxymethylaminomethyl modification enzyme MnmG from Streptococcus pyogenes serotype M4 (strain MGAS10750).